We begin with the raw amino-acid sequence, 263 residues long: Putative steroid dehydrogenase 4 (263 aa).

Residue Tyr-154 is the Proton acceptor of the active site.

The protein belongs to the short-chain dehydrogenases/reductases (SDR) family. 17-beta-HSD 3 subfamily.

The polypeptide is Putative steroid dehydrogenase 4 (stdh-4) (Caenorhabditis elegans).